Consider the following 207-residue polypeptide: dTDP-4-dehydrorhamnose 3-epimerase (207 aa).

Substrate contacts are provided by residues Arg23, Asp28, 47-49 (QAN), and Arg59. Residue His62 is the Proton acceptor of the active site. Lys72 and His119 together coordinate substrate. Tyr132 (proton donor) is an active-site residue. 2 residues coordinate substrate: Glu143 and Arg167.

This sequence belongs to the dTDP-4-dehydrorhamnose 3,5-epimerase family.

The protein operates within antibiotic biosynthesis; novobiocin biosynthesis. In terms of biological role, dTDP-6-deoxy-D-xylo-4-hexulose 3-epimerase that acts together with NovU to catalyze the formation of dTDP-4-keto-6-deoxy-5-C-methyl-L-lyxo-hexose from dTDP-4-keto-6-deoxy-D-glucose in the novobiocin biosynthesis pathway, an aminocoumarin family antibiotic that targets bacterial DNA gyrases. The polypeptide is dTDP-4-dehydrorhamnose 3-epimerase (Streptomyces niveus (Streptomyces spheroides)).